A 31-amino-acid chain; its full sequence is Photosystem II reaction center protein T (31 aa).

Residues 3 to 23 form a helical membrane-spanning segment; that stretch reads SAAYILVLALALGVIFFAIAF.

It belongs to the PsbT family. As to quaternary structure, PSII is composed of 1 copy each of membrane proteins PsbA, PsbB, PsbC, PsbD, PsbE, PsbF, PsbH, PsbI, PsbJ, PsbK, PsbL, PsbM, PsbT, PsbX, PsbY, PsbZ, Psb30/Ycf12, peripheral proteins PsbO, CyanoQ (PsbQ), PsbU, PsbV and a large number of cofactors. It forms dimeric complexes.

The protein localises to the cellular thylakoid membrane. Found at the monomer-monomer interface of the photosystem II (PS II) dimer, plays a role in assembly and dimerization of PSII. PSII is a light-driven water plastoquinone oxidoreductase, using light energy to abstract electrons from H(2)O, generating a proton gradient subsequently used for ATP formation. The protein is Photosystem II reaction center protein T of Trichodesmium erythraeum (strain IMS101).